A 996-amino-acid polypeptide reads, in one-letter code: Phototropin-1 (996 aa).

The segment at 1-184 (MEPTEKPSTK…PGGRSGIPRV (184 aa)) is disordered. Phosphoserine is present on residues Ser-23 and Ser-58. Residues 49–59 (QNLSDPRGTSP) show a composition bias toward polar residues. The span at 60–70 (QPRPQQEPAPS) shows a compositional bias: pro residues. Residues 141–153 (SGGTENDPNGKKT) show a composition bias toward polar residues. A compositionally biased stretch (low complexity) spans 155–166 (SQRNSQNSCRSS). Positions 184-257 (VSEDLKDALS…AKIRETLAAG (74 aa)) constitute a PAS 1 domain. Ser-185 is subject to Phosphoserine. FMN is bound at residue Asn-233. An S-4a-FMN cysteine modification is found at Cys-234. Arg-235, Gln-238, Arg-251, Asn-266, Asn-276, Gln-297, and Lys-302 together coordinate FMN. Positions 258–312 (NNYCGRILNYKKDGTSFWNLLTIAPIKDESGKVLKFIGMQVEVSKHTEGAKEKAL) constitute a PAC 1 domain. Residues Ser-350, Ser-376, and Ser-410 each carry the phosphoserine modification. 2 disordered regions span residues 351–413 (ESTN…SLSF) and 434–453 (YGEE…SVDD). Positions 434–443 (YGEEDDEISD) are enriched in acidic residues. The segment covering 444 to 453 (RDERPESVDD) has biased composition (basic and acidic residues). Phosphoserine is present on Ser-450. Residues 462–535 (KGIDLATTLE…KKIRNAIDNQ (74 aa)) form the PAS 2 domain. Asn-511 serves as a coordination point for FMN. Cys-512 bears the S-4a-FMN cysteine mark. Residues Arg-513, Gln-516, Arg-529, Asn-544, Asn-554, Phe-556, and Gln-575 each contribute to the FMN site. The PAC 2 domain maps to 536–590 (TEVTVQLINYTKSGKKFWNIFHLQPMRDQKGEVQYFIGVQLDGSKHVEPVRNVIE). Positions 663–952 (FKPVKPLGSG…ANEVKQHSFF (290 aa)) constitute a Protein kinase domain. ATP contacts are provided by residues 669–677 (LGSGDTGSV) and Lys-692. Asp-788 functions as the Proton acceptor in the catalytic mechanism. Residues 806–862 (DFDLSCLTSCKPQLLIPSIDEKKKKKQQKSQQTPIFMAEPMRASNSFVGTEEYIAPE) are activation loop.

Belongs to the protein kinase superfamily. AGC Ser/Thr protein kinase family. As to quaternary structure, homodimer; disulfide-linked. Interacts with PKS1, PKS2, RPT2, RPT3, PHOT2 and BLUS1. Subunit of a complex made of CAR6, PHOT1 and RPT3/NPH3. Associates with CBC1 and CBC2. Binds to BHP. FMN serves as cofactor. Post-translationally, autophosphorylated at Ser-185, Ser-350 and Ser-410 in response to blue light irradiation. 2 molecules of FMN bind covalently to cysteines after exposure to blue light and are reversed in the dark. In terms of tissue distribution, present in guard cells (at protein level).

The protein resides in the cell membrane. The protein localises to the cytoplasm. The enzyme catalyses L-seryl-[protein] + ATP = O-phospho-L-seryl-[protein] + ADP + H(+). The catalysed reaction is L-threonyl-[protein] + ATP = O-phospho-L-threonyl-[protein] + ADP + H(+). Autophosphorylation is inhibited by staurosporine, but not by tyrphostin 9, sphingosine, GW5074 and BML-265. Its function is as follows. Protein kinase that acts as a blue light (BL) photoreceptor in a signal-transduction pathway for photo-induced movements. Triggers the phosphorylation of AHA1 and AHA2 C-terminal penultimate Thr in guard cells to activate them and induce stomatal opening in response to blue light (BL). Also phosphorylates BLUS1, a kinase involved in stomatal opening. Mediates the phosphorylation of CBC1 in stomata, but not of CBC2, in response to blue light. Required for blue light mediated mRNA destabilization. Mediates calcium spiking of extracellular origin in response to a low rate of blue light. Also mediates rapid membrane depolarization and growth inhibition in response to blue light. Necessary for root phototropism. Involved in hypocotyl phototropism under a low rate but not under a high rate of blue light. Contributes to the chloroplast accumulation but seems not to be required for chloroplast translocation. Regulates stomata opening and photomorphogenesis response of leaf tissue. Confers sensitivity to drought. Not involved in hypocotyl elongation inhibition, anthocyanin accumulation or cotyledon opening. Involved in the regulation of leaf position and morphology via the phosphorylation of ABCB19 during blue light responses to modulate auxin distribution. The polypeptide is Phototropin-1 (Arabidopsis thaliana (Mouse-ear cress)).